We begin with the raw amino-acid sequence, 322 residues long: o-succinylbenzoate synthase (322 aa).

Lys136 acts as the Proton donor in catalysis. Mg(2+) is bound by residues Asp165, Glu194, and Asp219. Lys243 acts as the Proton acceptor in catalysis.

Belongs to the mandelate racemase/muconate lactonizing enzyme family. MenC type 1 subfamily. Monomer. It depends on a divalent metal cation as a cofactor.

The enzyme catalyses (1R,6R)-6-hydroxy-2-succinyl-cyclohexa-2,4-diene-1-carboxylate = 2-succinylbenzoate + H2O. It participates in quinol/quinone metabolism; 1,4-dihydroxy-2-naphthoate biosynthesis; 1,4-dihydroxy-2-naphthoate from chorismate: step 4/7. Its pathway is cofactor biosynthesis; phylloquinone biosynthesis. Functionally, converts 2-succinyl-6-hydroxy-2,4-cyclohexadiene-1-carboxylate (SHCHC) to 2-succinylbenzoate (OSB). Does not show N-succinylamino acid racemase (NSAR) activity with N-succinyl-L-phenylglycine as substrate. The sequence is that of o-succinylbenzoate synthase from Thermosynechococcus vestitus (strain NIES-2133 / IAM M-273 / BP-1).